The following is a 275-amino-acid chain: Urease accessory protein UreD (275 aa).

It belongs to the UreD family. UreD, UreF and UreG form a complex that acts as a GTP-hydrolysis-dependent molecular chaperone, activating the urease apoprotein by helping to assemble the nickel containing metallocenter of UreC. The UreE protein probably delivers the nickel.

It is found in the cytoplasm. Its function is as follows. Required for maturation of urease via the functional incorporation of the urease nickel metallocenter. The polypeptide is Urease accessory protein UreD (Cereibacter sphaeroides (strain ATCC 17025 / ATH 2.4.3) (Rhodobacter sphaeroides)).